The primary structure comprises 394 residues: MNSIIELTDYYSSNNYAPLKLVITEGKGGKVWDTDGKQYIDCISGFSVANQGHCHPTIVKAMTEQASKLSIISRVLYSDNLGKWEEKICHLAKKDKVLPLNSGTEAVEAAIKIARKWGSDVKGITDGQVEIIAMNNNFHGRTLGSLSLSNHDAYKSGFHPLLQGTKTVDFGDIEQLTQAISPNTAAIILEPIQGEGGVNIPPKGYIQAVRQLCDKHQILLIADEIQVGLGRTGKWFAMEWEQVVPDIYILGKALGGGLYPVSAVLANNDVMRVLTPGTHGSTFGGNPLAIAISTAALDVLKDEQLVERSERLGSFLLKALLQLKHPSIKEIRGRGLFIGIELNTDAAPFVEQLIKRGILCKDTHRTIIRLSPPLVIDKEEINQIVAAFQDVFKN.

Lysine 252 bears the N6-(pyridoxal phosphate)lysine mark.

This sequence belongs to the class-III pyridoxal-phosphate-dependent aminotransferase family. OAT subfamily. Pyridoxal 5'-phosphate is required as a cofactor.

It localises to the cytoplasm. It catalyses the reaction a 2-oxocarboxylate + L-ornithine = L-glutamate 5-semialdehyde + an L-alpha-amino acid. It functions in the pathway amino-acid biosynthesis; L-proline biosynthesis; L-glutamate 5-semialdehyde from L-ornithine: step 1/1. Catalyzes the interconversion of ornithine to glutamate semialdehyde. The sequence is that of Ornithine aminotransferase 1 from Staphylococcus aureus (strain MRSA252).